Reading from the N-terminus, the 294-residue chain is Cytidine deaminase (294 aa).

CMP/dCMP-type deaminase domains follow at residues aspartate 48–lysine 168 and leucine 186–glycine 294. Asparagine 89 to glutamate 91 serves as a coordination point for substrate. Histidine 102 serves as a coordination point for Zn(2+). Glutamate 104 (proton donor) is an active-site residue. Zn(2+) contacts are provided by cysteine 129 and cysteine 132.

It belongs to the cytidine and deoxycytidylate deaminase family. Homodimer. The cofactor is Zn(2+).

It carries out the reaction cytidine + H2O + H(+) = uridine + NH4(+). The catalysed reaction is 2'-deoxycytidine + H2O + H(+) = 2'-deoxyuridine + NH4(+). In terms of biological role, this enzyme scavenges exogenous and endogenous cytidine and 2'-deoxycytidine for UMP synthesis. The polypeptide is Cytidine deaminase (Salmonella choleraesuis (strain SC-B67)).